A 208-amino-acid polypeptide reads, in one-letter code: Protein-L-isoaspartate O-methyltransferase (208 aa).

Residue Ser-59 is part of the active site.

The protein belongs to the methyltransferase superfamily. L-isoaspartyl/D-aspartyl protein methyltransferase family.

Its subcellular location is the cytoplasm. It carries out the reaction [protein]-L-isoaspartate + S-adenosyl-L-methionine = [protein]-L-isoaspartate alpha-methyl ester + S-adenosyl-L-homocysteine. In terms of biological role, catalyzes the methyl esterification of L-isoaspartyl residues in peptides and proteins that result from spontaneous decomposition of normal L-aspartyl and L-asparaginyl residues. It plays a role in the repair and/or degradation of damaged proteins. The protein is Protein-L-isoaspartate O-methyltransferase of Salmonella newport (strain SL254).